The chain runs to 791 residues: uncharacterized protein (791 aa).

A helical membrane pass occupies residues 10–30; it reads LLTITIGAVAVSSILLGGIFY. The segment covering 56-76 has biased composition (basic and acidic residues); that stretch reads NLDYQKARPSIKDNNLKEIPK. The disordered stretch occupies residues 56-175; that stretch reads NLDYQKARPS…PQPQQIPNQS (120 aa). A compositionally biased stretch (pro residues) spans 77 to 97; sequence PKPQPKPEPQPTPFPDPIPTP. The span at 98-124 shows a compositional bias: basic and acidic residues; that stretch reads PKKEELKKPEIKPEEPKKPEIKPEPIP. Pro residues predominate over residues 125–139; it reads KPKPQPIPQPTPPVE.

It to U.parvum UU044.

Its subcellular location is the membrane. This is an uncharacterized protein from Ureaplasma parvum serovar 3 (strain ATCC 700970).